A 194-amino-acid polypeptide reads, in one-letter code: AP-3 complex subunit sigma (194 aa).

The protein belongs to the adaptor complexes small subunit family. In terms of assembly, adaptor protein complex 3 (AP-3) is a heterotetramer composed of 2 large adaptins (APL5 and APL6), a medium adaptin (APM3) and a small adaptin (APS3).

It is found in the golgi apparatus. The protein resides in the cytoplasmic vesicle membrane. Functionally, part of the AP-3 complex, an adaptor-related complex which is not clathrin-associated. The complex is associated with the Golgi region as well as more peripheral structures. It facilitates the budding of vesicles from the Golgi membrane and may be directly involved in trafficking to the vacuole. Required for the transport via the ALP pathway, which directs the transport of the cargo proteins PHO8 and VAM3 to the vacuole. The sequence is that of AP-3 complex subunit sigma (APS3) from Saccharomyces cerevisiae (strain ATCC 204508 / S288c) (Baker's yeast).